Here is a 304-residue protein sequence, read N- to C-terminus: 6-dehydroglucose reductase (304 aa).

Residues Trp-28, Arg-29, and Asp-56 each contribute to the NADP(+) site. Tyr-61 serves as the catalytic Proton donor. Positions 61, 133, and 134 each coordinate D-glucose. Positions 163, 164, 185, 215, 217, 219, 268, 269, 270, and 274 each coordinate NADP(+).

Belongs to the aldo/keto reductase family.

The enzyme catalyses D-glucose + NADP(+) = 6-dehydro-D-glucose + NADPH + H(+). In terms of biological role, part of the alkanesulfonate monooxygenase (sulfo-ASMO) pathway, a D-sulfoquinovose degradation pathway that enables the complete utilization of all carbons within sulfoquinovose (SQ) with concomitant production of inorganic sulfite. Catalyzes the NADP-dependent reduction of 6-dehydro-D-glucose to D-glucose. Can also catalyze the reversible reaction, the formation of 6-dehydro-D-glucose from D-glucose in the presence of NADP(+). The sequence is that of 6-dehydroglucose reductase from Novosphingobium aromaticivorans (strain ATCC 700278 / DSM 12444 / CCUG 56034 / CIP 105152 / NBRC 16084 / F199).